The sequence spans 154 residues: 3-dehydroquinate dehydratase (154 aa).

Catalysis depends on tyrosine 23, which acts as the Proton acceptor. Residues asparagine 74, histidine 80, and aspartate 87 each coordinate substrate. The Proton donor role is filled by histidine 100. Substrate is bound by residues 101–102 and arginine 111; that span reads LS.

It belongs to the type-II 3-dehydroquinase family. In terms of assembly, homododecamer.

It carries out the reaction 3-dehydroquinate = 3-dehydroshikimate + H2O. The protein operates within metabolic intermediate biosynthesis; chorismate biosynthesis; chorismate from D-erythrose 4-phosphate and phosphoenolpyruvate: step 3/7. In terms of biological role, catalyzes a trans-dehydration via an enolate intermediate. The sequence is that of 3-dehydroquinate dehydratase from Actinobacillus pleuropneumoniae serotype 5b (strain L20).